The chain runs to 197 residues: Xanthine phosphoribosyltransferase (197 aa).

Residues Leu-20 and Asn-27 each coordinate xanthine. 5-phospho-alpha-D-ribose 1-diphosphate is bound at residue 128–132 (ANGQA). Lys-156 lines the xanthine pocket.

The protein belongs to the purine/pyrimidine phosphoribosyltransferase family. Xpt subfamily. As to quaternary structure, homodimer.

It is found in the cytoplasm. The enzyme catalyses XMP + diphosphate = xanthine + 5-phospho-alpha-D-ribose 1-diphosphate. It participates in purine metabolism; XMP biosynthesis via salvage pathway; XMP from xanthine: step 1/1. Functionally, converts the preformed base xanthine, a product of nucleic acid breakdown, to xanthosine 5'-monophosphate (XMP), so it can be reused for RNA or DNA synthesis. The protein is Xanthine phosphoribosyltransferase of Bacillus cereus (strain ATCC 14579 / DSM 31 / CCUG 7414 / JCM 2152 / NBRC 15305 / NCIMB 9373 / NCTC 2599 / NRRL B-3711).